The chain runs to 278 residues: Potassium/proton antiporter CemA (278 aa).

4 helical membrane passes run 61–81 (LIVLVVFPVVVHQVSKNFIIG), 155–175 (AIKNILADSISISVFILLIVL), 203–223 (IILFTDMFIGFHSPHGWEVVI), and 238–258 (FIFLFIATFPVSLDTVFKYWI).

It belongs to the CemA family.

It localises to the plastid. Its subcellular location is the chloroplast inner membrane. It carries out the reaction K(+)(in) + H(+)(out) = K(+)(out) + H(+)(in). In terms of biological role, contributes to K(+)/H(+) antiport activity by supporting proton efflux to control proton extrusion and homeostasis in chloroplasts in a light-dependent manner to modulate photosynthesis. Prevents excessive induction of non-photochemical quenching (NPQ) under continuous-light conditions. Indirectly promotes efficient inorganic carbon uptake into chloroplasts. The sequence is that of Potassium/proton antiporter CemA from Cyanidium caldarium (Red alga).